A 183-amino-acid polypeptide reads, in one-letter code: Chromophore lyase CpcT/CpeT 4 (183 aa).

The protein belongs to the CpcT/CpeT biliprotein lyase family.

Covalently attaches a chromophore to Cys residue(s) of phycobiliproteins. The sequence is that of Chromophore lyase CpcT/CpeT 4 from Gloeobacter violaceus (strain ATCC 29082 / PCC 7421).